The primary structure comprises 434 residues: Putative ZDHHC-type palmitoyltransferase 1 (434 aa).

A run of 2 helical transmembrane segments spans residues 25-45 and 53-73; these read AYFI…LIFV and ITAA…IFLI. Residues 115 to 165 enclose the DHHC domain; sequence KWCETCCLYRPPRANHCGICNNCVERFDHHCPWVGNCIGRRNYQTFLYFLY. The active-site S-palmitoyl cysteine intermediate is the Cys145. Residues 160–180 form a helical membrane-spanning segment; that stretch reads FLYFLYSLGFLCIWIMGFCVA. 9 N-linked (GlcNAc...) asparagine glycosylation sites follow: Asn207, Asn216, Asn274, Asn346, Asn362, Asn373, Asn381, Asn387, and Asn393. The interval 262-330 is disordered; that stretch reads TIPTPNNING…ISPPQMLQRQ (69 aa). The segment covering 267–316 has biased composition (low complexity); it reads NNINGNNNNSINNNNNNNNNNNNNNNNNNNNNNNNNNINNGNSGGTTNNG. The disordered stretch occupies residues 365-434; it reads TISEDKPKNL…SLNHELQVNV (70 aa). Residues 373–387 show a composition bias toward low complexity; the sequence is NLSNSNNNNNTNNKN. Residues 409-419 show a composition bias toward basic and acidic residues; it reads DDFKSDNDKEI. N-linked (GlcNAc...) asparagine glycosylation is present at Asn420. Polar residues predominate over residues 420 to 434; that stretch reads NSSSLSLNHELQVNV.

It belongs to the DHHC palmitoyltransferase family.

The protein localises to the membrane. The enzyme catalyses L-cysteinyl-[protein] + hexadecanoyl-CoA = S-hexadecanoyl-L-cysteinyl-[protein] + CoA. The chain is Putative ZDHHC-type palmitoyltransferase 1 from Dictyostelium discoideum (Social amoeba).